A 222-amino-acid chain; its full sequence is Mediator of RNA polymerase II transcription subunit 7 (222 aa).

A disordered region spans residues 34–55; sequence YKEKKAASAKQTAPNNSNGGSE. Residues 42-53 are compositionally biased toward polar residues; that stretch reads AKQTAPNNSNGG.

This sequence belongs to the Mediator complex subunit 7 family. As to quaternary structure, component of the Mediator complex, which is composed of at least 21 subunits that form three structurally distinct submodules. The Mediator head module contains MED6, MED8, MED11, SRB4/MED17, SRB5/MED18, ROX3/MED19, SRB2/MED20 and SRB6/MED22, the middle module contains MED1, MED4, NUT1/MED5, MED7, CSE2/MED9, NUT2/MED10, SRB7/MED21 and SOH1/MED31, and the tail module contains MED2, PGD1/MED3, RGR1/MED14, GAL11/MED15 and SIN4/MED16. The head and the middle modules interact directly with RNA polymerase II, whereas the elongated tail module interacts with gene-specific regulatory proteins. MED7 interacts directly with MED1, MED4 and SRB7/MED21.

It is found in the nucleus. In terms of biological role, component of the Mediator complex, a coactivator involved in the regulated transcription of nearly all RNA polymerase II-dependent genes. Mediator functions as a bridge to convey information from gene-specific regulatory proteins to the basal RNA polymerase II transcription machinery. The Mediator complex, having a compact conformation in its free form, is recruited to promoters by direct interactions with regulatory proteins and serves for the assembly of a functional preinitiation complex with RNA polymerase II and the general transcription factors. The Mediator complex unfolds to an extended conformation and partially surrounds RNA polymerase II, specifically interacting with the unphosphorylated form of the C-terminal domain (CTD) of RNA polymerase II. The Mediator complex dissociates from the RNA polymerase II holoenzyme and stays at the promoter when transcriptional elongation begins. This chain is Mediator of RNA polymerase II transcription subunit 7 (MED7), found in Saccharomyces cerevisiae (strain ATCC 204508 / S288c) (Baker's yeast).